Here is a 541-residue protein sequence, read N- to C-terminus: uncharacterized protein (541 aa).

The N-terminal stretch at 1-17 (MSFSATILFSPPSGSEA) is a signal peptide. 2 disordered regions span residues 28–47 (TSQGSTGSQGGNPPASTPIT) and 103–138 (GKVCTADEDRESRARTPPPEEPGVLKGSPGEASNSL). Residues 103-116 (GKVCTADEDRESRA) are compositionally biased toward basic and acidic residues. Phosphothreonine is present on Thr118. Residues Lys128 and Lys223 each participate in a glycyl lysine isopeptide (Lys-Gly) (interchain with G-Cter in SUMO2) cross-link. Ser226 carries the post-translational modification Phosphoserine. A compositionally biased stretch (polar residues) spans 232–243 (AIQRASSETGPE). Positions 232–254 (AIQRASSETGPESGTKLPATRPE) are disordered. Residues Ser286 and Ser429 each carry the phosphoserine modification. Residues 494 to 526 (YNPNFQEDEGGGNEKGPVSPSYDQPHKTSCPDL) are disordered.

Its subcellular location is the secreted. This is an uncharacterized protein from Mus musculus (Mouse).